The primary structure comprises 163 residues: Large ribosomal subunit protein uL10 (163 aa).

It belongs to the universal ribosomal protein uL10 family. As to quaternary structure, part of the ribosomal stalk of the 50S ribosomal subunit. The N-terminus interacts with L11 and the large rRNA to form the base of the stalk. The C-terminus forms an elongated spine to which L12 dimers bind in a sequential fashion forming a multimeric L10(L12)X complex.

Functionally, forms part of the ribosomal stalk, playing a central role in the interaction of the ribosome with GTP-bound translation factors. In Blochmanniella pennsylvanica (strain BPEN), this protein is Large ribosomal subunit protein uL10.